Here is a 360-residue protein sequence, read N- to C-terminus: Photosystem II protein D1 (360 aa).

3 helical membrane-spanning segments follow: residues 29–46 (YIGW…TATC), 118–133 (HFLI…EWEL), and 142–156 (WICV…AATA). H118 provides a ligand contact to chlorophyll a. Residue Y126 coordinates pheophytin a. Residues D170 and E189 each contribute to the [CaMn4O5] cluster site. A helical membrane pass occupies residues 197–218 (FHMAGVAGVFGGALFSAMHGSL). Position 198 (H198) interacts with chlorophyll a. Residues H215 and 264 to 265 (SF) contribute to the a quinone site. H215 contributes to the Fe cation binding site. Position 272 (H272) interacts with Fe cation. The helical transmembrane segment at 274-288 (FLGAWPVVGIWLTAI) threads the bilayer. Positions 332, 333, 342, and 344 each coordinate [CaMn4O5] cluster. Positions 345 to 360 (SNSVVPVALTAPSVEA) are excised as a propeptide.

The protein belongs to the reaction center PufL/M/PsbA/D family. As to quaternary structure, PSII is composed of 1 copy each of membrane proteins PsbA, PsbB, PsbC, PsbD, PsbE, PsbF, PsbH, PsbI, PsbJ, PsbK, PsbL, PsbM, PsbT, PsbX, PsbY, PsbZ, Psb30/Ycf12, at least 3 peripheral proteins of the oxygen-evolving complex and a large number of cofactors. It forms dimeric complexes. The D1/D2 heterodimer binds P680, chlorophylls that are the primary electron donor of PSII, and subsequent electron acceptors. It shares a non-heme iron and each subunit binds pheophytin, quinone, additional chlorophylls, carotenoids and lipids. D1 provides most of the ligands for the Mn4-Ca-O5 cluster of the oxygen-evolving complex (OEC). There is also a Cl(-1) ion associated with D1 and D2, which is required for oxygen evolution. The PSII complex binds additional chlorophylls, carotenoids and specific lipids. is required as a cofactor. Post-translationally, tyr-161 forms a radical intermediate that is referred to as redox-active TyrZ, YZ or Y-Z. C-terminally processed by CTPA; processing is essential to allow assembly of the oxygen-evolving complex and thus photosynthetic growth.

The protein localises to the plastid. The protein resides in the chloroplast thylakoid membrane. It catalyses the reaction 2 a plastoquinone + 4 hnu + 2 H2O = 2 a plastoquinol + O2. Photosystem II (PSII) is a light-driven water:plastoquinone oxidoreductase that uses light energy to abstract electrons from H(2)O, generating O(2) and a proton gradient subsequently used for ATP formation. It consists of a core antenna complex that captures photons, and an electron transfer chain that converts photonic excitation into a charge separation. The D1/D2 (PsbA/PsbD) reaction center heterodimer binds P680, the primary electron donor of PSII as well as several subsequent electron acceptors. The sequence is that of Photosystem II protein D1 from Cyanidioschyzon merolae (strain NIES-3377 / 10D) (Unicellular red alga).